Here is a 92-residue protein sequence, read N- to C-terminus: Alpha-hemoglobin-stabilizing protein (92 aa).

Belongs to the AHSP family. As to quaternary structure, monomer. Forms a heterodimer with free alpha-hemoglobin. Does not bind beta-hemoglobin nor alpha(2)beta(2) hemoglobin A.

Its subcellular location is the cytoplasm. Acts as a chaperone to prevent the harmful aggregation of alpha-hemoglobin during normal erythroid cell development. Specifically protects free alpha-hemoglobin from precipitation. The polypeptide is Alpha-hemoglobin-stabilizing protein (AHSP) (Bos taurus (Bovine)).